The chain runs to 552 residues: 2-methyl-1,2-propanediol dehydrogenase (552 aa).

This sequence belongs to the GMC oxidoreductase family. Requires FAD as cofactor.

It localises to the cytoplasm. It catalyses the reaction 2-methylpropane-1,2-diol + NAD(+) = 2-hydroxy-2-methylpropanal + NADH + H(+). Involved in the degradation of methyl tert-butyl ether (MTBE). Catalyzes the conversion of 2-methyl 1,2-propanediol (2-M1,2-PD) to hydroxyisobutyraldehyde. This is 2-methyl-1,2-propanediol dehydrogenase from Mycolicibacterium austroafricanum (Mycobacterium austroafricanum).